A 683-amino-acid chain; its full sequence is Protein hook (683 aa).

Positions 5–123 (NGMYYSLLEW…RLLQLVLGCA (119 aa)) constitute a Calponin-homology (CH) domain. Coiled-coil stretches lie at residues 135 to 440 (EIMC…LKCG) and 484 to 594 (QTAL…AKEV).

It belongs to the hook family. In terms of assembly, homodimer. Interacts with microtubules via its N-terminus.

It localises to the cytoplasm. It is found in the cytoskeleton. The protein localises to the endosome. Its subcellular location is the synapse. In terms of biological role, involved in endocytic trafficking by stabilizing organelles of the endocytic pathway. Probably acts as a cytoskeletal linker protein required to tether endosome vesicles to the cytoskeleton. Involved in modulation of endocytosis at stages required for down-regulation of membrane proteins that control synapse size. Not involved in synaptic vesicle recycling. Required in R7 cells for boss endocytosis into multivesicular bodies (MVBs). Has a role in regulating adult longevity. The sequence is that of Protein hook from Drosophila grimshawi (Hawaiian fruit fly).